The primary structure comprises 153 residues: Ribonuclease H (153 aa).

Residues 7–148 (PADLVEMWTD…ADMLANQGVA (142 aa)) form the RNase H type-1 domain. Mg(2+) is bound by residues D16, E54, D76, and D140.

Belongs to the RNase H family. In terms of assembly, monomer. Mg(2+) is required as a cofactor.

The protein resides in the cytoplasm. The enzyme catalyses Endonucleolytic cleavage to 5'-phosphomonoester.. In terms of biological role, endonuclease that specifically degrades the RNA of RNA-DNA hybrids. This chain is Ribonuclease H, found in Bordetella avium (strain 197N).